The chain runs to 341 residues: Killer cell immunoglobulin-like receptor 2DL3 (341 aa).

Residues 1-21 (MSLMVVSMVCVGFFLLQGAWP) form the signal peptide. At 22–245 (HEGVHRKPSL…SETGNPRHLH (224 aa)) the chain is on the extracellular side. 2 Ig-like C2-type domains span residues 42-107 (EETV…VTHS) and 142-205 (GESV…FRDS). 2 disulfide bridges follow: C49-C100 and C149-C198. N-linked (GlcNAc...) asparagine glycosylation is found at N84, N178, and N211. Residues 220–239 (VTGNPSNSWPSPTEPSSETG) form a disordered region. Residues 223–239 (NPSNSWPSPTEPSSETG) show a composition bias toward low complexity. The helical transmembrane segment at 246–265 (VLIGTSVVIILFILLLFFLL) threads the bilayer. At 266–341 (HRWCCNKKNA…VYTELPNAEP (76 aa)) the chain is on the cytoplasmic side.

This sequence belongs to the immunoglobulin superfamily. As to quaternary structure, interacts with ARRB2.

Its subcellular location is the cell membrane. Its function is as follows. Receptor on natural killer (NK) cells for HLA-C alleles (HLA-Cw1, HLA-Cw3 and HLA-Cw7). Inhibits the activity of NK cells thus preventing cell lysis. The polypeptide is Killer cell immunoglobulin-like receptor 2DL3 (Homo sapiens (Human)).